The chain runs to 255 residues: MSQPLLSVNGLMMRFGGLLAVNNVNLELYPQEIVSLIGPNGAGKTTVFNCLTGFYKPTGGTILLRDQHLEGLPGQQIARMGVVRTFQHVRLFREMTVIENLLVAQHQQLKTGLFSGLLKTPSFRRAQSEALDRAATWLERIGLLEHANRQASNLAYGDQRRLEIARCMVTQPEILMLDEPAAGLNPKETKELDELIAELRNHHNTTILLIEHDMKLVMGISDRIYVVNQGTPLANGTPEQIRNNPDVIRAYLGEA.

The ABC transporter domain maps to 6–254; the sequence is LSVNGLMMRF…PDVIRAYLGE (249 aa). 38 to 45 is an ATP binding site; it reads GPNGAGKT.

This sequence belongs to the ABC transporter superfamily.

In terms of biological role, component of the leucine-specific transport system. The sequence is that of High-affinity branched-chain amino acid transport ATP-binding protein LivG (livG) from Escherichia coli O157:H7.